Here is a 108-residue protein sequence, read N- to C-terminus: MTLGQQAEAHAQRYLEQQGLTFVERNVRYPFGEIDLIMRHKSHWVFVEVKYRSATQYGGALQALSAAQITRIRKAANHYLQLNRLDVPCRFDVIAMEADQIHWLVDAF.

Belongs to the UPF0102 family.

In Shewanella baltica (strain OS155 / ATCC BAA-1091), this protein is UPF0102 protein Sbal_4100.